Reading from the N-terminus, the 151-residue chain is Large ribosomal subunit protein bL9 (151 aa).

Belongs to the bacterial ribosomal protein bL9 family.

Its function is as follows. Binds to the 23S rRNA. The sequence is that of Large ribosomal subunit protein bL9 from Carboxydothermus hydrogenoformans (strain ATCC BAA-161 / DSM 6008 / Z-2901).